The sequence spans 682 residues: Pneumocandin biosynthesis cluster protein B (682 aa).

Over residues 63-73 the composition is skewed to low complexity; the sequence is SSLSSTEVTSS. Disordered stretches follow at residues 63-86, 107-129, and 251-358; these read SSLS…DAPE, QNTP…DTNQ, and SEST…SPAN. 2 stretches are compositionally biased toward polar residues: residues 257–279 and 310–320; these read NTGS…SHSS and PRQTTEATPCD. A compositionally biased stretch (basic and acidic residues) spans 335-349; that stretch reads PERRSMKMVRKEARD.

Part of the gene cluster that mediates the biosynthesis of pneumocandins, lipohexapeptides of the echinocandin family that prevent fungal cell wall formation by non-competitive inhibition of beta-1,3-glucan synthase. The 10,12-dimethylmyristoyl side chain is synthesized by the reducing polyketide synthase gloL/GLPKS4. The thioesterase gloN/GLHYD exclusively interacts with gloL/GLPKS4 to maintain turnover of the polyketide side chain. The 10R,12S-dimethylmyristic acid is then transferred to the first thiolation domain of the nonribosomal peptide synthetase gloA/GLNRPS4 by the acyl-AMP ligase gloD/GLligase, followed by its acylation to L-ornithine to trigger elongation of the cyclic hexapeptide. L-ornithine, 4R-hydroxyl-L-proline (generated from L-proline by the dioxygenase gloF/GLOXY2), 3S-hydroxyl-L-homotyrosine (generated by gloG/GLHtyB, gloH/GLHtyA, gloI/GLHtyC, gloJ/GLHtyD and hydroxylated at C-3 by the dioxygenase gloM/GLOXY1), 3R-hydroxyl-L-glutamine (generated from L-glutamine probably by the dioxygenase gloE/GLOXY3) and 3S-hydroxyl-L-proline (generated from L-proline by the dioxygenase gloF/GLOXY2 to yield pneumocandin B0), or 3S-hydroxyl-4S-methyl-L-proline (generated from L-leucine by the dioxygenase gloC/GLOXY4 to yield pneumocandin A0) are sequentially added to the growing chain. The last C domain of gloA/GLNRPS4 is proposed to be responsible for cyclization by condensation to form the peptide bond between L-ornithine and 3S-hydroxyl-4S-methyl-L-proline (for pneumocandin A0) or 3S-hydroxyl-L-proline (for pneumocandin B0). Finally, the subsequent C-4 hydroxylation of 3S-hydroxyl-L-homotyrosine and L-ornithine dihydroxylation at C-4 and C-5 are performed by the cytochrome P450 monooxygenases gloP/GLP450-1 and gloO/GLP450-2, respectively. This chain is Pneumocandin biosynthesis cluster protein B, found in Glarea lozoyensis (strain ATCC 20868 / MF5171).